A 257-amino-acid chain; its full sequence is 3-methyl-2-oxobutanoate hydroxymethyltransferase (257 aa).

Residues aspartate 42 and aspartate 86 each coordinate Mg(2+). 3-methyl-2-oxobutanoate is bound by residues 42–43, aspartate 86, and lysine 116; that span reads DS. Glutamate 118 contacts Mg(2+). Glutamate 185 serves as the catalytic Proton acceptor.

This sequence belongs to the PanB family. As to quaternary structure, homodecamer; pentamer of dimers. Mg(2+) is required as a cofactor.

It localises to the cytoplasm. The catalysed reaction is 3-methyl-2-oxobutanoate + (6R)-5,10-methylene-5,6,7,8-tetrahydrofolate + H2O = 2-dehydropantoate + (6S)-5,6,7,8-tetrahydrofolate. It functions in the pathway cofactor biosynthesis; (R)-pantothenate biosynthesis; (R)-pantoate from 3-methyl-2-oxobutanoate: step 1/2. Functionally, catalyzes the reversible reaction in which hydroxymethyl group from 5,10-methylenetetrahydrofolate is transferred onto alpha-ketoisovalerate to form ketopantoate. The sequence is that of 3-methyl-2-oxobutanoate hydroxymethyltransferase from Prochlorococcus marinus (strain MIT 9301).